The primary structure comprises 223 residues: Uracil-DNA glycosylase (223 aa).

The Proton acceptor role is filled by Asp67.

The protein belongs to the uracil-DNA glycosylase (UDG) superfamily. UNG family.

The protein resides in the cytoplasm. It catalyses the reaction Hydrolyzes single-stranded DNA or mismatched double-stranded DNA and polynucleotides, releasing free uracil.. Functionally, excises uracil residues from the DNA which can arise as a result of misincorporation of dUMP residues by DNA polymerase or due to deamination of cytosine. The sequence is that of Uracil-DNA glycosylase from Borreliella burgdorferi (strain ZS7) (Borrelia burgdorferi).